The sequence spans 516 residues: Extracellular endo-inulinase inuA (516 aa).

Residues 1–25 (MLNPKVAYMVWMTCLGLMLPSQAQS) form the signal peptide. Substrate-binding positions include 40 to 43 (WMNE), Q59, W67, and 99 to 100 (FT). The active site involves E43. A glycan (N-linked (GlcNAc...) asparagine) is linked at N109. 175 to 176 (RD) is a substrate binding site. N210 carries N-linked (GlcNAc...) asparagine glycosylation. Substrate is bound at residue E233. 2 N-linked (GlcNAc...) asparagine glycosylation sites follow: N372 and N419.

The protein belongs to the glycosyl hydrolase 32 family.

Its subcellular location is the secreted. The catalysed reaction is Endohydrolysis of (2-&gt;1)-beta-D-fructosidic linkages in inulin.. With respect to regulation, activity is stimulated by Mn(2+), Fe(2+) Ca(2+) metal ions and DTT; and inhibited by glucose, Mg(2+), Zn(2+), Cu(2+), Hg(2+), Al(3+), and Fe(3+). Endo-inulinase involved in utilization of the plant storage polymer inulin, consisting of fructooligosaccharides with a degree of polymerization (DP) value from 2 to 60. The sequence is that of Extracellular endo-inulinase inuA (inuA) from Aspergillus niger.